We begin with the raw amino-acid sequence, 253 residues long: Testis-expressed protein 101 (253 aa).

Positions 1 to 24 (MAACWVHYLLLLLLGVSHQTLAQS) are cleaved as a signal peptide. 5 N-linked (GlcNAc...) asparagine glycosylation sites follow: N44, N112, N117, N121, and N162. The region spanning 53-117 (ETCNPGELCQ…SNYCNSSLCN (65 aa)) is the UPAR/Ly6 1 domain. The UPAR/Ly6 2 domain occupies 143 to 218 (CPTCVALGSC…KETCSYHSLL (76 aa)). The GPI-anchor amidated serine moiety is linked to residue S226. Residues 227–253 (RASGRSTSLWVLELLLPAVLVALTHFP) constitute a propeptide, removed in mature form.

Interacts with VAMP3. Interacts with LY6K. Interacts with DPEP3; co-localized on the cell surface of spermatocytes, spermatids, and testicular spermatozoa, co-localized only in cytoplasmic droplets of caput and corpus epididymal sperm. Interacts with ADAM5. Post-translationally, N-glycosylated; by high mannose and/or biantennary complex and/or certain types of hybrid oligosaccharides; possesses different oligosaccharides chains according to its subcellular localization in the testis. In terms of processing, sheds from membrane raft by ACE and released from the cell surface of epididymal sperm while it passes through the caput epididymis leading to disappearance of TEX101 on spermatozoa; is essential to produce fertile spermatozoa.

It is found in the cell membrane. It localises to the membrane raft. The protein resides in the cytoplasmic vesicle. The protein localises to the secretory vesicle. Its subcellular location is the acrosome. It is found in the secreted. Functionally, plays a role in fertilization by controlling binding of sperm to zona pellucida and migration of spermatozoa into the oviduct. May play a role in signal transduction and promote protein tyrosine phosphorylation. This Cricetulus griseus (Chinese hamster) protein is Testis-expressed protein 101.